Here is a 156-residue protein sequence, read N- to C-terminus: Snaclec A15 (156 aa).

The N-terminal stretch at 1–23 is a signal peptide; the sequence is MGRFIFVRFGLLVVFLSLSGTGA. 3 disulfides stabilise this stretch: cysteine 27-cysteine 38, cysteine 55-cysteine 152, and cysteine 127-cysteine 144. The region spanning 34-153 is the C-type lectin domain; that stretch reads YDQHCYKAFD…CGDDYPFVCK (120 aa). N-linked (GlcNAc...) asparagine glycosylation occurs at asparagine 141.

This sequence belongs to the snaclec family. Heterodimer; disulfide-linked. Expressed by the venom gland.

It localises to the secreted. In terms of biological role, interferes with one step of hemostasis (modulation of platelet aggregation, or coagulation cascade, for example). This chain is Snaclec A15, found in Macrovipera lebetinus (Levantine viper).